Here is a 217-residue protein sequence, read N- to C-terminus: Nucleoredoxin-like protein 1 (217 aa).

A Thioredoxin domain is found at 1 to 164 (MASLFSGRIL…AAELLDRSFL (164 aa)). The span at 188–204 (VDRDVGRERGRNGRDSG) shows a compositional bias: basic and acidic residues. Residues 188–217 (VDRDVGRERGRNGRDSGDPQGDAGTRAELW) form a disordered region.

Belongs to the nucleoredoxin family. Interacts with isoform 1 of BSG. In terms of tissue distribution, expressed in the retina (at protein level). Expressed predominantly by photoreceptors in both the inner and outer nuclear layer (at protein level). Not expressed in the testis, spleen, intestine, lung, cerebellum, or kidney.

Its subcellular location is the cell projection. The protein localises to the cilium. It is found in the photoreceptor outer segment. In terms of biological role, plays an important role in retinal cone photoreceptor survival. In association with glucose transporter SLC16A1/GLUT1 and BSG, promotes retinal cone survival by enhancing aerobic glycolysis and accelerating the entry of glucose into photoreceptors. May play a role in cone cell viability, slowing down cone degeneration, does not seem to play a role in degenerating rods. The sequence is that of Nucleoredoxin-like protein 1 (Nxnl1) from Mus musculus (Mouse).